The chain runs to 908 residues: Translation initiation factor IF-2 (908 aa).

Disordered stretches follow at residues 123 to 154 (EEPP…EELK) and 212 to 278 (KKEP…VSEK). The region spanning 407 to 577 (ERAPIVTIMG…LFEAELLELK (171 aa)) is the tr-type G domain. Residues 416–423 (GHVDHGKT) form a G1 region. 416 to 423 (GHVDHGKT) contacts GTP. The interval 441 to 445 (GITQH) is G2. The segment at 463–466 (DTPG) is G3. Residues 463–467 (DTPGH) and 517–520 (NKMD) each bind GTP. The segment at 517–520 (NKMD) is G4. Residues 553-555 (SAI) are G5.

The protein belongs to the TRAFAC class translation factor GTPase superfamily. Classic translation factor GTPase family. IF-2 subfamily.

The protein resides in the cytoplasm. In terms of biological role, one of the essential components for the initiation of protein synthesis. Protects formylmethionyl-tRNA from spontaneous hydrolysis and promotes its binding to the 30S ribosomal subunits. Also involved in the hydrolysis of GTP during the formation of the 70S ribosomal complex. The polypeptide is Translation initiation factor IF-2 (Amoebophilus asiaticus (strain 5a2)).